A 381-amino-acid polypeptide reads, in one-letter code: Cobalt-precorrin-5B C(1)-methyltransferase (381 aa).

The protein belongs to the CbiD family.

The catalysed reaction is Co-precorrin-5B + S-adenosyl-L-methionine = Co-precorrin-6A + S-adenosyl-L-homocysteine. Its pathway is cofactor biosynthesis; adenosylcobalamin biosynthesis; cob(II)yrinate a,c-diamide from sirohydrochlorin (anaerobic route): step 6/10. In terms of biological role, catalyzes the methylation of C-1 in cobalt-precorrin-5B to form cobalt-precorrin-6A. In Prochlorococcus marinus (strain NATL1A), this protein is Cobalt-precorrin-5B C(1)-methyltransferase.